The primary structure comprises 141 residues: MSIRRFAREAALQFLYQDDFIPESADTPGELKERFEQFCEIYQVNKKGRTYALNLIAGVLADQEAIDRLIEEAAVNWRMSRISATDRNLLRVATFEINFCDDVPAEVAINEAVEIAKRFCGDESPKFVNGVLDAVKTLCQK.

Belongs to the NusB family.

Involved in transcription antitermination. Required for transcription of ribosomal RNA (rRNA) genes. Binds specifically to the boxA antiterminator sequence of the ribosomal RNA (rrn) operons. The sequence is that of Transcription antitermination protein NusB from Desulfotalea psychrophila (strain LSv54 / DSM 12343).